A 219-amino-acid polypeptide reads, in one-letter code: Guanylate kinase (219 aa).

One can recognise a Guanylate kinase-like domain in the interval 15 to 194; the sequence is GLMFVLSSPS…AFAEVQSILK (180 aa). 22–29 lines the ATP pocket; that stretch reads SPSGAGKT.

Belongs to the guanylate kinase family.

The protein localises to the cytoplasm. It catalyses the reaction GMP + ATP = GDP + ADP. In terms of biological role, essential for recycling GMP and indirectly, cGMP. This chain is Guanylate kinase, found in Nitrobacter hamburgensis (strain DSM 10229 / NCIMB 13809 / X14).